Reading from the N-terminus, the 217-residue chain is Chorionic somatomammotropin hormone 2 (217 aa).

Positions 1-26 (MAAGSRTSLLLAFALLCLPWLQEAGA) are cleaved as a signal peptide. Residue histidine 44 participates in Zn(2+) binding. An intrachain disulfide couples cysteine 79 to cysteine 191. Glutamate 200 is a Zn(2+) binding site. An intrachain disulfide couples cysteine 208 to cysteine 215.

This sequence belongs to the somatotropin/prolactin family. As to quaternary structure, can be found in a monomeric as well as dimeric form.

The protein resides in the secreted. Functionally, produced only during pregnancy and is involved in stimulating lactation, fetal growth and metabolism. Does not interact with GHR but only activates PRLR through zinc-induced dimerization. The protein is Chorionic somatomammotropin hormone 2 (CSH2) of Homo sapiens (Human).